A 340-amino-acid polypeptide reads, in one-letter code: Mitochondrial carrier protein CoAc1 (340 aa).

6 helical membrane passes run 22–42 (ALDLLPVYAKELIAGGAAGAF), 85–105 (FYKGNGASVLRIVPYAALHYM), 130–147 (LLAGSAAGGTAVLCTYPL), 199–219 (GVGPTLIGILPYAGLKFYIYE), 237–257 (LSCGALAGLFGQTLTYPLDVV), and 297–317 (FAGLSLNYVKVVPSVAIGFTT). 3 Solcar repeats span residues 27-113 (PVYA…YRCW), 124-224 (TGPV…LKSQ), and 231-324 (DSVI…MKAL).

Belongs to the mitochondrial carrier (TC 2.A.29) family. As to expression, expressed throughout the plant.

It is found in the mitochondrion inner membrane. Its function is as follows. Required for the accumulation of coenzyme A in the mitochondrial matrix. This chain is Mitochondrial carrier protein CoAc1, found in Zea mays (Maize).